Reading from the N-terminus, the 501-residue chain is uncharacterized protein (501 aa).

A BAR domain is found at 14–237 (EKFGFDRQKT…GFSKKRDNVN (224 aa)). A Phosphothreonine modification is found at threonine 285. Disordered regions lie at residues 302–321 (IASS…DVSD) and 329–414 (SAVD…RSYS). Residues 309–320 (QHTEDNYNKDVS) show a composition bias toward basic and acidic residues. Residues 390–402 (SQCNVSPSPSNIS) show a composition bias toward polar residues. Serine 414 carries the phosphoserine modification. Residues 421 to 487 (SSRKVVRMKY…PSNYCVPAHP (67 aa)) enclose the SH3 domain.

It is found in the cytoplasm. This is an uncharacterized protein from Schizosaccharomyces pombe (strain 972 / ATCC 24843) (Fission yeast).